The sequence spans 337 residues: Phosphate acyltransferase (337 aa).

This sequence belongs to the PlsX family. As to quaternary structure, homodimer. Probably interacts with PlsY.

The protein localises to the cytoplasm. It carries out the reaction a fatty acyl-[ACP] + phosphate = an acyl phosphate + holo-[ACP]. Its pathway is lipid metabolism; phospholipid metabolism. In terms of biological role, catalyzes the reversible formation of acyl-phosphate (acyl-PO(4)) from acyl-[acyl-carrier-protein] (acyl-ACP). This enzyme utilizes acyl-ACP as fatty acyl donor, but not acyl-CoA. In Moritella marina (Vibrio marinus), this protein is Phosphate acyltransferase.